Here is a 631-residue protein sequence, read N- to C-terminus: Probable potassium transport system protein Kup (631 aa).

The next 12 membrane-spanning stretches (helical) occupy residues 17 to 37, 56 to 76, 109 to 129, 147 to 167, 174 to 194, 215 to 235, 256 to 276, 288 to 308, 346 to 366, 378 to 398, 403 to 423, and 428 to 448; these read IGLL…SPLY, ILGV…FKYM, MMMV…SMIT, GLDH…FLIQ, IGVL…ALGV, FFII…LALT, WFIL…ALVL, LLAP…ATII, IYIG…VIGF, VAVT…MLML, PLLA…FFAA, and IFQG…LMTT.

The protein belongs to the HAK/KUP transporter (TC 2.A.72) family.

It is found in the cell inner membrane. It catalyses the reaction K(+)(in) + H(+)(in) = K(+)(out) + H(+)(out). Transport of potassium into the cell. Likely operates as a K(+):H(+) symporter. This chain is Probable potassium transport system protein Kup, found in Pseudomonas savastanoi pv. phaseolicola (strain 1448A / Race 6) (Pseudomonas syringae pv. phaseolicola (strain 1448A / Race 6)).